Here is a 152-residue protein sequence, read N- to C-terminus: MFKEFREFAMRGNVIDLAVGVVIGAAFGSIVKSLVDDIIMPPIGLLIGKVNFADLFITLKAGATPGPYATVAAAKAAGAVTMNVGQFINSVVSFVLIAFSVFLLVKVVNRLYQKKDAAAPAPATRDCPFCATAIPLAATRCPHCTSQVPPAD.

The next 2 membrane-spanning stretches (helical) occupy residues 14-34 and 84-104; these read VIDL…VKSL and VGQF…VFLL.

The protein belongs to the MscL family. As to quaternary structure, homopentamer.

The protein localises to the cell inner membrane. Its function is as follows. Channel that opens in response to stretch forces in the membrane lipid bilayer. May participate in the regulation of osmotic pressure changes within the cell. The protein is Large-conductance mechanosensitive channel of Laribacter hongkongensis (strain HLHK9).